The chain runs to 349 residues: Hydroxymethylglutaryl-CoA synthase (349 aa).

Asp-30 is a binding site for (3S)-3-hydroxy-3-methylglutaryl-CoA. The active-site Proton donor/acceptor is the Glu-82. Residue Cys-114 participates in (3S)-3-hydroxy-3-methylglutaryl-CoA binding. Residue Cys-114 is the Acyl-thioester intermediate of the active site. Arg-203 contacts CoA. Thr-205 and His-238 together coordinate (3S)-3-hydroxy-3-methylglutaryl-CoA. His-238 serves as the catalytic Proton donor/acceptor. Lys-243 provides a ligand contact to CoA. 3 residues coordinate (3S)-3-hydroxy-3-methylglutaryl-CoA: Lys-247, Asn-270, and Ser-300.

Belongs to the thiolase-like superfamily. Archaeal HMG-CoA synthase family. In terms of assembly, interacts with acetoacetyl-CoA thiolase that catalyzes the precedent step in the pathway and with a DUF35 protein. The acetoacetyl-CoA thiolase/HMG-CoA synthase complex channels the intermediate via a fused CoA-binding site, which allows for efficient coupling of the endergonic thiolase reaction with the exergonic HMGCS reaction.

The enzyme catalyses acetoacetyl-CoA + acetyl-CoA + H2O = (3S)-3-hydroxy-3-methylglutaryl-CoA + CoA + H(+). It functions in the pathway metabolic intermediate biosynthesis; (R)-mevalonate biosynthesis; (R)-mevalonate from acetyl-CoA: step 2/3. In terms of biological role, catalyzes the condensation of acetyl-CoA with acetoacetyl-CoA to form 3-hydroxy-3-methylglutaryl-CoA (HMG-CoA). Functions in the mevalonate (MVA) pathway leading to isopentenyl diphosphate (IPP), a key precursor for the biosynthesis of isoprenoid compounds that are building blocks of archaeal membrane lipids. The chain is Hydroxymethylglutaryl-CoA synthase from Methanothermococcus thermolithotrophicus (Methanococcus thermolithotrophicus).